A 174-amino-acid chain; its full sequence is Gamma-crystallin C (174 aa).

Beta/gamma crystallin 'Greek key' domains are found at residues 2-40 (GKIT…RVES) and 41-83 (GCWM…CLIP). Cys-23 carries the S-methylcysteine modification. Residues 84 to 87 (QTGS) are connecting peptide. 2 consecutive Beta/gamma crystallin 'Greek key' domains span residues 88-128 (HRLR…HVLE) and 129-171 (GCWV…RRVV).

Belongs to the beta/gamma-crystallin family. Monomer.

Crystallins are the dominant structural components of the vertebrate eye lens. This is Gamma-crystallin C (CRYGC) from Macaca mulatta (Rhesus macaque).